Here is a 316-residue protein sequence, read N- to C-terminus: MTRKVKAAIIGSGNIGTDLMIKILRHGQHIEMGAMVGIDPASDGLARAQRMGVAITHEGVEGLTRLPVFNEIDVVFDATSAGAHVKNEALLRERKPGLRMIDLTPAAIGPYCIPVVNGDDHLDATNVNMVTCGGQATIPMVAAVSRVAKVHYAEIIASISSKSAGPGTRANIDEFTETTSKAIEVVGGAAKGKAIIVLNPAEPPLMMRDTVYTLSDFADIDQIEESVQRMADAVQAYVPGYRLKQRVQFDRIEADCPIRIPGVGDRMNGLKTSIFLEVEGAAHYLPAYAGNLDIMTSAALRTAEKLAERLLASLVA.

Position 12 to 15 (12 to 15) interacts with NAD(+); that stretch reads SGNI. Catalysis depends on C132, which acts as the Acyl-thioester intermediate. NAD(+) contacts are provided by residues 163-171 and N291; that span reads SAGPGTRAN.

This sequence belongs to the acetaldehyde dehydrogenase family.

The enzyme catalyses acetaldehyde + NAD(+) + CoA = acetyl-CoA + NADH + H(+). In Pseudomonas putida (strain ATCC 700007 / DSM 6899 / JCM 31910 / BCRC 17059 / LMG 24140 / F1), this protein is Acetaldehyde dehydrogenase 1.